Here is a 480-residue protein sequence, read N- to C-terminus: Glutamate--tRNA ligase 2 (480 aa).

The short motif at 15-25 is the 'HIGH' region element; that stretch reads PSPTGYLHVGG. A 'KMSKS' region motif is present at residues 248-252; it reads RLSKR. An ATP-binding site is contributed by Lys-251.

This sequence belongs to the class-I aminoacyl-tRNA synthetase family. Glutamate--tRNA ligase type 1 subfamily. As to quaternary structure, monomer.

It localises to the cytoplasm. It carries out the reaction tRNA(Glu) + L-glutamate + ATP = L-glutamyl-tRNA(Glu) + AMP + diphosphate. Functionally, catalyzes the attachment of glutamate to tRNA(Glu) in a two-step reaction: glutamate is first activated by ATP to form Glu-AMP and then transferred to the acceptor end of tRNA(Glu). The protein is Glutamate--tRNA ligase 2 of Koribacter versatilis (strain Ellin345).